The primary structure comprises 93 residues: Small ribosomal subunit protein uS19 (93 aa).

The protein belongs to the universal ribosomal protein uS19 family.

In terms of biological role, protein S19 forms a complex with S13 that binds strongly to the 16S ribosomal RNA. The chain is Small ribosomal subunit protein uS19 (rpsS) from Thermus thermophilus (strain ATCC BAA-163 / DSM 7039 / HB27).